A 342-amino-acid polypeptide reads, in one-letter code: Phosphate acyltransferase (342 aa).

It belongs to the PlsX family. Homodimer. Probably interacts with PlsY.

It localises to the cytoplasm. It carries out the reaction a fatty acyl-[ACP] + phosphate = an acyl phosphate + holo-[ACP]. It functions in the pathway lipid metabolism; phospholipid metabolism. Its function is as follows. Catalyzes the reversible formation of acyl-phosphate (acyl-PO(4)) from acyl-[acyl-carrier-protein] (acyl-ACP). This enzyme utilizes acyl-ACP as fatty acyl donor, but not acyl-CoA. In Shewanella amazonensis (strain ATCC BAA-1098 / SB2B), this protein is Phosphate acyltransferase.